The primary structure comprises 273 residues: MTKLIIHLVSDSSVQTAKSAAHSALAQFTSLKPKLYHWPMIRNSELLKEVLSKIESKHGIVLYTIADQELRKTLTKFCYELKIPCISVISKIIKEMSVFSGIEIEKEQNYNYKFDKTYFDTLNAIDYAIRHDDGQLLNELQFADIILIGPSRTSKTPTSVFLAYNGLKTANIPYVYNCPFPDFIEKDIDQLVVGLVINPNRLIEIRETRLNLLQINENRNYTDFNIVQKECLEVKKICELRNWPVIDVSTKSIEETAALIMRIYYNKKNKYKK.

149 to 156 (GPSRTSKT) serves as a coordination point for ADP.

It belongs to the pyruvate, phosphate/water dikinase regulatory protein family. PDRP subfamily.

It catalyses the reaction N(tele)-phospho-L-histidyl/L-threonyl-[pyruvate, phosphate dikinase] + ADP = N(tele)-phospho-L-histidyl/O-phospho-L-threonyl-[pyruvate, phosphate dikinase] + AMP + H(+). The catalysed reaction is N(tele)-phospho-L-histidyl/O-phospho-L-threonyl-[pyruvate, phosphate dikinase] + phosphate + H(+) = N(tele)-phospho-L-histidyl/L-threonyl-[pyruvate, phosphate dikinase] + diphosphate. Its function is as follows. Bifunctional serine/threonine kinase and phosphorylase involved in the regulation of the pyruvate, phosphate dikinase (PPDK) by catalyzing its phosphorylation/dephosphorylation. This is Putative pyruvate, phosphate dikinase regulatory protein from Rickettsia bellii (strain RML369-C).